The chain runs to 382 residues: Phosphatidylglycerol--prolipoprotein diacylglyceryl transferase (382 aa).

The next 3 helical transmembrane spans lie at 18–38, 53–73, and 91–111; these read IQWYGIIVSIGIIFAILMFVF, FFIFIAVLTMVLGARLWSFVI, and LAIQGGILLTSIVGVIYFNFF. Arginine 162 lines the a 1,2-diacyl-sn-glycero-3-phospho-(1'-sn-glycerol) pocket. A run of 4 helical transmembrane segments spans residues 213-233, 243-263, 274-294, and 302-322; these read IPLFLIESFFNTIFFVLIYFV, GTIGFSYFLATGIIRLILENF, ITTSILFIVVGILGIFYCQFI, and FWTYFFLYAFYKVAAFFTTLF.

It belongs to the Lgt family.

It is found in the cell membrane. It catalyses the reaction L-cysteinyl-[prolipoprotein] + a 1,2-diacyl-sn-glycero-3-phospho-(1'-sn-glycerol) = an S-1,2-diacyl-sn-glyceryl-L-cysteinyl-[prolipoprotein] + sn-glycerol 1-phosphate + H(+). Its pathway is protein modification; lipoprotein biosynthesis (diacylglyceryl transfer). Its function is as follows. Catalyzes the transfer of the diacylglyceryl group from phosphatidylglycerol to the sulfhydryl group of the N-terminal cysteine of a prolipoprotein, the first step in the formation of mature lipoproteins. This chain is Phosphatidylglycerol--prolipoprotein diacylglyceryl transferase, found in Mycoplasma genitalium (strain ATCC 33530 / DSM 19775 / NCTC 10195 / G37) (Mycoplasmoides genitalium).